The primary structure comprises 488 residues: MKSYIAVDIGASSGRLMLGQQKRGQLTLKEVHRFSNGFAMKDGHDRWDVDHLIHEIFKGLEKVKKMGIKDVELGIDTWAVDYVLVGENGHKLEDPISYRDKRTHNAIQQLTSDLPKEYIYEKTGIQFQDFNTLYQLYKENHDLLAKTDKIMMMPDYLGYVLTGNAVTEITNASTTQMLNLRVGLFDKDLLGKVNVSQDQFPRLVESGSVLGNVSHKWHTQYDIPEVEVVTVATHDTASAVVGTPGEGDRWAFLSSGTWSLLGTELNVPENGLQAFHENYTNEWGAYGTYRFLKNIMGLWVAQCVRHELGDQYSFGELADLAQQVRPFQQFIDINDERFTNPENMIKELQDYCRETKQTIPETPGELFQAIYSNLSLFYANELNKLDRILGYHIDTLNIVGGGSNVALMNQLTSTLANIKVVAGPSEATAVGNIMVQMITSDEVENIGAGRRLIETSFDLKRYLPETNKYGDILKEYQRFLTNKSKEMV.

11–15 (ASSGR) provides a ligand contact to ATP. Substrate is bound by residues alanine 79 and 234–236 (HDT). Catalysis depends on aspartate 235, which acts as the Proton acceptor. Threonine 257 is a binding site for ATP. Asparagine 294 serves as a coordination point for substrate. Glutamine 302 and glycine 401 together coordinate ATP.

Belongs to the rhamnulokinase family. It depends on Mg(2+) as a cofactor.

The enzyme catalyses L-rhamnulose + ATP = L-rhamnulose 1-phosphate + ADP + H(+). It functions in the pathway carbohydrate degradation; L-rhamnose degradation; glycerone phosphate from L-rhamnose: step 2/3. In terms of biological role, involved in the catabolism of L-rhamnose (6-deoxy-L-mannose). Catalyzes the transfer of the gamma-phosphate group from ATP to the 1-hydroxyl group of L-rhamnulose to yield L-rhamnulose 1-phosphate. The protein is Rhamnulokinase of Lactiplantibacillus plantarum (strain ATCC BAA-793 / NCIMB 8826 / WCFS1) (Lactobacillus plantarum).